Consider the following 253-residue polypeptide: Tryptophan synthase alpha chain (253 aa).

Residues Glu46 and Asp57 each act as proton acceptor in the active site.

Belongs to the TrpA family. As to quaternary structure, tetramer of two alpha and two beta chains.

The catalysed reaction is (1S,2R)-1-C-(indol-3-yl)glycerol 3-phosphate + L-serine = D-glyceraldehyde 3-phosphate + L-tryptophan + H2O. Its pathway is amino-acid biosynthesis; L-tryptophan biosynthesis; L-tryptophan from chorismate: step 5/5. Its function is as follows. The alpha subunit is responsible for the aldol cleavage of indoleglycerol phosphate to indole and glyceraldehyde 3-phosphate. In Dictyoglomus thermophilum (strain ATCC 35947 / DSM 3960 / H-6-12), this protein is Tryptophan synthase alpha chain.